We begin with the raw amino-acid sequence, 132 residues long: uncharacterized protein (132 aa).

The next 2 helical transmembrane spans lie at 12 to 32 (VIGF…KKLY) and 37 to 57 (LTLA…IPVL).

The protein localises to the cell membrane. This is an uncharacterized protein from Methanocaldococcus jannaschii (strain ATCC 43067 / DSM 2661 / JAL-1 / JCM 10045 / NBRC 100440) (Methanococcus jannaschii).